The sequence spans 749 residues: Amyloid-beta A4 precursor protein-binding family A member 2 (749 aa).

3 disordered regions span residues 1 to 94 (MAHR…PEEE), 130 to 220 (DTDE…GDLE), and 238 to 344 (SMTS…NIPE). Position 11 is a phosphoserine (serine 11). Over residues 70 to 80 (GDSSSDYVNNT) the composition is skewed to polar residues. Acidic residues-rich tracts occupy residues 81 to 94 (SEEE…PEEE) and 131 to 142 (TDECQEAVEEWT). Residues 185 to 270 (HYCASKEGYQ…SVEACPPIKA (86 aa)) form an STXBP1-binding region. A Phosphoserine modification is found at serine 208. Over residues 238-247 (SMTSITSASE) the composition is skewed to polar residues. Residues 305–315 (RTPEERLKWPH) show a composition bias toward basic and acidic residues. Residues 368–555 (DGIIFAANYL…IINTQEMYND (188 aa)) enclose the PID domain. 2 PDZ domains span residues 568-654 (ELQL…IVSC) and 659-734 (TVLI…TMPA).

Part of a multimeric complex containing STXBP1 and syntaxin-1. Binds to the cytoplasmic domain of amyloid-beta protein, and to the nuclear factor NF-kappa-B/p65 via its PDZ domain. Interacts with the N-terminal domain of NECAB3. As to expression, brain.

In terms of biological role, putative function in synaptic vesicle exocytosis by binding to STXBP1, an essential component of the synaptic vesicle exocytotic machinery. May modulate processing of the amyloid-beta precursor protein (APP) and hence formation of APP-beta. The sequence is that of Amyloid-beta A4 precursor protein-binding family A member 2 (APBA2) from Homo sapiens (Human).